The following is a 556-amino-acid chain: uncharacterized protein (556 aa).

5 disordered regions span residues 1 to 40, 80 to 243, 278 to 324, 363 to 391, and 422 to 525; these read MSNS…TNEN, NTTQ…KQSW, YDSD…SSLP, RTKQ…KFVD, and DSKQ…ENSA. Over residues 7 to 25 the composition is skewed to low complexity; it reads NNNNNTNNNNNNNNNNNGN. The span at 30–40 shows a compositional bias: acidic residues; that stretch reads EEPDDDSTNEN. Low complexity-rich tracts occupy residues 80–133 and 164–181; these read NTTQ…GTRS and NDNN…NDSN. The segment covering 182–192 has biased composition (acidic residues); that stretch reads IVDDDEDEEEF. Positions 207-226 are enriched in low complexity; sequence STSSPSSTSSPIVSPQTQTS. Polar residues predominate over residues 227–243; sequence KLESSMDVSPSSGKQSW. Composition is skewed to low complexity over residues 292 to 322, 369 to 388, and 425 to 525; these read NNSS…NSSS, KVQQ…NNNK, and QQNV…ENSA. Residues 528-548 traverse the membrane as a helical segment; that stretch reads GSFIKNAVIFIFILLLMVVGF.

The protein localises to the membrane. This is an uncharacterized protein from Dictyostelium discoideum (Social amoeba).